A 458-amino-acid polypeptide reads, in one-letter code: GTPase Der (458 aa).

EngA-type G domains are found at residues Pro3–Glu167 and Ile176–Thr351. Residues Gly9–Ser16, Asp56–Phe60, Asn119–Asp122, Gly182–Ser189, Asp229–Leu233, and Asn294–Asp297 contribute to the GTP site. The 85-residue stretch at Phe352–Pro436 folds into the KH-like domain.

It belongs to the TRAFAC class TrmE-Era-EngA-EngB-Septin-like GTPase superfamily. EngA (Der) GTPase family. Associates with the 50S ribosomal subunit.

In terms of biological role, GTPase that plays an essential role in the late steps of ribosome biogenesis. This chain is GTPase Der, found in Desulfosudis oleivorans (strain DSM 6200 / JCM 39069 / Hxd3) (Desulfococcus oleovorans).